The primary structure comprises 184 residues: Large ribosomal subunit protein uL6 (184 aa).

Belongs to the universal ribosomal protein uL6 family. As to quaternary structure, part of the 50S ribosomal subunit.

Functionally, this protein binds to the 23S rRNA, and is important in its secondary structure. It is located near the subunit interface in the base of the L7/L12 stalk, and near the tRNA binding site of the peptidyltransferase center. The protein is Large ribosomal subunit protein uL6 of Pyrococcus abyssi (strain GE5 / Orsay).